Consider the following 87-residue polypeptide: Protein Tat (87 aa).

Residues 1–21 (MDPVDPNLEPWNHPGSQPRTP) are disordered. Positions 1 to 24 (MDPVDPNLEPWNHPGSQPRTPCNK) are interaction with human CREBBP. Residues 1–48 (MDPVDPNLEPWNHPGSQPRTPCNKCYCKKCCYHCQMCFITKGLGISYG) form a transactivation region. Residues Cys22, Cys25, and Cys27 each coordinate Zn(2+). The cysteine-rich stretch occupies residues 22–37 (CNKCYCKKCCYHCQMC). Lys28 is modified (N6-acetyllysine; by host PCAF). Zn(2+)-binding residues include Cys30, His33, Cys34, and Cys37. The tract at residues 38–48 (FITKGLGISYG) is core. Residues 45-87 (ISYGRKKRRQRRRPPQGNQAHQDPLPEQPSSQHRGDHPTGPKE) form a disordered region. Residues 48 to 58 (GRKKRRQRRRP) are compositionally biased toward basic residues. The short motif at 49 to 57 (RKKRRQRRR) is the Nuclear localization signal, RNA-binding (TAR), and protein transduction element. Positions 49 to 87 (RKKRRQRRRPPQGNQAHQDPLPEQPSSQHRGDHPTGPKE) are interaction with the host capping enzyme RNGTT. An N6-acetyllysine; by host EP300 and GCN5L2 mark is found at Lys50 and Lys51. An asymmetric dimethylarginine; by host PRMT6 mark is found at Arg52 and Arg53. A compositionally biased stretch (basic and acidic residues) spans 77–87 (HRGDHPTGPKE). A Cell attachment site motif is present at residues 78–80 (RGD).

This sequence belongs to the lentiviruses Tat family. As to quaternary structure, interacts with host CCNT1. Associates with the P-TEFb complex composed at least of Tat, P-TEFb (CDK9 and CCNT1), TAR RNA, RNA Pol II. Recruits the HATs CREBBP, TAF1/TFIID, EP300, PCAF and GCN5L2. Interacts with host KAT5/Tip60; this interaction targets the latter to degradation. Interacts with the host deacetylase SIRT1. Interacts with host capping enzyme RNGTT; this interaction stimulates RNGTT. Binds to host KDR, and to the host integrins ITGAV/ITGB3 and ITGA5/ITGB1. Interacts with host KPNB1/importin beta-1 without previous binding to KPNA1/importin alpha-1. Interacts with EIF2AK2. Interacts with host nucleosome assembly protein NAP1L1; this interaction may be required for the transport of Tat within the nucleus, since the two proteins interact at the nuclear rim. Interacts with host C1QBP/SF2P32; this interaction involves lysine-acetylated Tat. Interacts with the host chemokine receptors CCR2, CCR3 and CXCR4. Interacts with host DPP4/CD26; this interaction may trigger an anti-proliferative effect. Interacts with host LDLR. Interacts with the host extracellular matrix metalloproteinase MMP1. Interacts with host PRMT6; this interaction mediates Tat's methylation. Interacts with, and is ubiquitinated by MDM2/Hdm2. Interacts with host PSMC3 and HTATIP2. Interacts with STAB1; this interaction may overcome SATB1-mediated repression of IL2 and IL2RA (interleukin) in T cells by binding to the same domain than HDAC1. Interacts (when acetylated) with human CDK13, thereby increasing HIV-1 mRNA splicing and promoting the production of the doubly spliced HIV-1 protein Nef. Interacts with host TBP; this interaction modulates the activity of transcriptional pre-initiation complex. Interacts with host RELA. Interacts with host PLSCR1; this interaction negatively regulates Tat transactivation activity by altering its subcellular distribution. Asymmetrical arginine methylation by host PRMT6 seems to diminish the transactivation capacity of Tat and affects the interaction with host CCNT1. In terms of processing, acetylation by EP300, CREBBP, GCN5L2/GCN5 and PCAF regulates the transactivation activity of Tat. EP300-mediated acetylation of Lys-50 promotes dissociation of Tat from the TAR RNA through the competitive binding to PCAF's bromodomain. In addition, the non-acetylated Tat's N-terminus can also interact with PCAF. PCAF-mediated acetylation of Lys-28 enhances Tat's binding to CCNT1. Lys-50 is deacetylated by SIRT1. Post-translationally, polyubiquitination by host MDM2 does not target Tat to degradation, but activates its transactivation function and fosters interaction with CCNT1 and TAR RNA. Phosphorylated by EIF2AK2 on serine and threonine residues adjacent to the basic region important for TAR RNA binding and function. Phosphorylation of Tat by EIF2AK2 is dependent on the prior activation of EIF2AK2 by dsRNA.

It localises to the host nucleus. It is found in the host nucleolus. Its subcellular location is the host cytoplasm. The protein localises to the secreted. In terms of biological role, transcriptional activator that increases RNA Pol II processivity, thereby increasing the level of full-length viral transcripts. Recognizes a hairpin structure at the 5'-LTR of the nascent viral mRNAs referred to as the transactivation responsive RNA element (TAR) and recruits the cyclin T1-CDK9 complex (P-TEFb complex) that will in turn hyperphosphorylate the RNA polymerase II to allow efficient elongation. The CDK9 component of P-TEFb and other Tat-activated kinases hyperphosphorylate the C-terminus of RNA Pol II that becomes stabilized and much more processive. Other factors such as HTATSF1/Tat-SF1, SUPT5H/SPT5, and HTATIP2 are also important for Tat's function. Besides its effect on RNA Pol II processivity, Tat induces chromatin remodeling of proviral genes by recruiting the histone acetyltransferases (HATs) CREBBP, EP300 and PCAF to the chromatin. This also contributes to the increase in proviral transcription rate, especially when the provirus integrates in transcriptionally silent region of the host genome. To ensure maximal activation of the LTR, Tat mediates nuclear translocation of NF-kappa-B by interacting with host RELA. Through its interaction with host TBP, Tat may also modulate transcription initiation. Tat can reactivate a latently infected cell by penetrating in it and transactivating its LTR promoter. In the cytoplasm, Tat is thought to act as a translational activator of HIV-1 mRNAs. Its function is as follows. Extracellular circulating Tat can be endocytosed by surrounding uninfected cells via the binding to several surface receptors such as CD26, CXCR4, heparan sulfate proteoglycans (HSPG) or LDLR. Neurons are rarely infected, but they internalize Tat via their LDLR. Through its interaction with nuclear HATs, Tat is potentially able to control the acetylation-dependent cellular gene expression. Modulates the expression of many cellular genes involved in cell survival, proliferation or in coding for cytokines or cytokine receptors. Tat plays a role in T-cell and neurons apoptosis. Tat induced neurotoxicity and apoptosis probably contribute to neuroAIDS. Circulating Tat also acts as a chemokine-like and/or growth factor-like molecule that binds to specific receptors on the surface of the cells, affecting many cellular pathways. In the vascular system, Tat binds to ITGAV/ITGB3 and ITGA5/ITGB1 integrins dimers at the surface of endothelial cells and competes with bFGF for heparin-binding sites, leading to an excess of soluble bFGF. The chain is Protein Tat from Homo sapiens (Human).